A 549-amino-acid polypeptide reads, in one-letter code: Tegument protein (549 aa).

Disordered regions lie at residues Lys50–Pro92, Glu353–Tyr391, and Thr523–Pro542. 2 stretches are compositionally biased toward polar residues: residues Pro75–Ser84 and Asp356–Arg369. Low complexity predominate over residues Thr523 to Arg534.

In terms of biological role, this viral structural protein may have important functions, such as protein kinase activity, DNA binding, and possible transcriptional activation of immediate-early genes. The polypeptide is Tegument protein (Homo sapiens (Human)).